The chain runs to 426 residues: MANPVTEIDVDLNTQEVLLAASQHDTAKLRRLLRANDAAGNPANVKDPETGYSPLHAAIAACEPDEEEDVKSNGVQTNGDRQTHGQESTVEAAVQTVKLLLQEGAIWNDLDLNNETPGCIARRLGLTELYDMVVDAGVRAELLLNRLDGYEQLSDEEMEEDGEQEQEQQDAAVAADASITNTAEDESVPQLVDTTAAAPPQTADAEPSVTSSRYLNSDLTFQQDRLLDQDQNGVMMAWESDIMAKSAKQLLPTPGLRVLNVGHGMGIVDGFIQEQSPSAHHIIEAHPAVVAEMKRKGWHEKPGVVIHEGKWQDILPGLVAEGVMFDAIYYDTFAESYADFREFFTEQVIGVLEQEGKWSFFNGMGADRQISYDVYQKVVEMDLFEAGFDVEWEEIDVPKLEGEWNGVRRPYWSIDKYRLPLCKYMD.

2 disordered regions span residues 65 to 88 (DEEEDVKSNGVQTNGDRQTHGQES) and 155 to 175 (DEEMEEDGEQEQEQQDAAVAA). Over residues 73–88 (NGVQTNGDRQTHGQES) the composition is skewed to polar residues. A compositionally biased stretch (acidic residues) spans 155–168 (DEEMEEDGEQEQEQ). Residues 207–426 (PSVTSSRYLN…YRLPLCKYMD (220 aa)) enclose the RMT2 domain. Residues Tyr-214, Met-243, 263–268 (HGMGIV), 284–286 (EAH), 311–312 (WQ), and Asp-331 each bind S-adenosyl-L-methionine.

Belongs to the class I-like SAM-binding methyltransferase superfamily. RMT2 methyltransferase family. Monomer.

Its subcellular location is the cytoplasm. The protein localises to the nucleus. In terms of biological role, S-adenosyl-L-methionine-dependent protein-arginine N-methyltransferase that methylates the delta-nitrogen atom of arginine residues to form N5-methylarginine (type IV) in target proteins. Monomethylates ribosomal protein L12. This chain is Protein arginine N-methyltransferase 2, found in Emericella nidulans (strain FGSC A4 / ATCC 38163 / CBS 112.46 / NRRL 194 / M139) (Aspergillus nidulans).